The primary structure comprises 318 residues: Cobalamin biosynthesis protein CobD (318 aa).

5 consecutive transmembrane segments (helical) span residues 56-76 (VLWLLVVGITWLVSWGFLWLM), 78-98 (EINPWLGWLAQVWMIYTLLAG), 153-173 (VDGVIAPLFFLMLGGAPLAMA), 204-224 (LANWLPARLSWVLLSAAAWLI), and 298-318 (MMASLLALLLFALTHLLLVGI).

The protein belongs to the CobD/CbiB family.

The protein localises to the cell membrane. Its pathway is cofactor biosynthesis; adenosylcobalamin biosynthesis. Converts cobyric acid to cobinamide by the addition of aminopropanol on the F carboxylic group. This is Cobalamin biosynthesis protein CobD from Yersinia enterocolitica serotype O:8 / biotype 1B (strain NCTC 13174 / 8081).